Here is a 78-residue protein sequence, read N- to C-terminus: Small ribosomal subunit protein bS18 (78 aa).

The protein belongs to the bacterial ribosomal protein bS18 family. In terms of assembly, part of the 30S ribosomal subunit. Forms a tight heterodimer with protein bS6.

Binds as a heterodimer with protein bS6 to the central domain of the 16S rRNA, where it helps stabilize the platform of the 30S subunit. This is Small ribosomal subunit protein bS18 from Ligilactobacillus salivarius (strain UCC118) (Lactobacillus salivarius).